The sequence spans 325 residues: DNA-directed RNA polymerase subunit alpha (325 aa).

The tract at residues 1 to 231 (MQTSLLKPKI…DQLSVFAALE (231 aa)) is alpha N-terminal domain (alpha-NTD). The alpha C-terminal domain (alpha-CTD) stretch occupies residues 246-325 (IDPILLRPVD…ENWPPAGLDK (80 aa)).

Belongs to the RNA polymerase alpha chain family. In terms of assembly, homodimer. The RNAP catalytic core consists of 2 alpha, 1 beta, 1 beta' and 1 omega subunit. When a sigma factor is associated with the core the holoenzyme is formed, which can initiate transcription.

The catalysed reaction is RNA(n) + a ribonucleoside 5'-triphosphate = RNA(n+1) + diphosphate. Its function is as follows. DNA-dependent RNA polymerase catalyzes the transcription of DNA into RNA using the four ribonucleoside triphosphates as substrates. In Paraburkholderia phymatum (strain DSM 17167 / CIP 108236 / LMG 21445 / STM815) (Burkholderia phymatum), this protein is DNA-directed RNA polymerase subunit alpha.